The sequence spans 330 residues: Probable cytosolic iron-sulfur protein assembly protein 1 (330 aa).

7 WD repeats span residues 12-49 (LYKE…FTLI), 56-95 (AHKK…DRTF), 105-144 (GHEN…EEYE), 151-190 (EHSQ…WECV), 195-236 (GHEG…EDDQ), 248-286 (VHKR…WKVF), and 292-330 (CHGV…EKAA).

The protein belongs to the WD repeat CIA1 family. As to quaternary structure, interacts with NAR1.

Its subcellular location is the cytoplasm. It localises to the nucleus. In terms of biological role, essential component of the cytosolic iron-sulfur (Fe/S) protein assembly machinery. Required for the maturation of extramitochondrial Fe/S proteins. This chain is Probable cytosolic iron-sulfur protein assembly protein 1, found in Saccharomyces cerevisiae (strain YJM789) (Baker's yeast).